The sequence spans 667 residues: uncharacterized protein (667 aa).

The disordered stretch occupies residues 321-345 (AGEAASSDHDQKISRVTRKRPREPK). The 178-residue stretch at 375 to 552 (EIYMADTPSV…LQRIGLTGLA (178 aa)) folds into the Helicase ATP-binding domain. 388-395 (APPGYGKT) contributes to the ATP binding site. Residues 498 to 501 (DEFH) carry the DEAH box motif.

Belongs to the helicase family. Yeast subtelomeric Y' repeat subfamily.

This is an uncharacterized protein from Saccharomyces cerevisiae (strain ATCC 204508 / S288c) (Baker's yeast).